Here is a 1244-residue protein sequence, read N- to C-terminus: Ras-specific guanine nucleotide-releasing factor 1 (1244 aa).

The PH 1 domain occupies 22 to 129; the sequence is DGTRKGYLSK…WVAAIARASY (108 aa). Serine 71 is subject to Phosphoserine; by PLK2. The 26-residue stretch at 204 to 229 folds into the IQ domain; that stretch reads KKIKKVQSFLRGWLCRRKWKNIIQDY. Residues 240–426 enclose the DH domain; sequence KRNQVVFSML…EELSRVMHDE (187 aa). The PH 2 domain occupies 456–582; sequence TFVRQGSLIQ…WTSDIIQCVD (127 aa). Phosphoserine; by PLK2 is present on residues serine 575 and serine 611. The region spanning 629–743 is the N-terminal Ras-GEF domain; it reads KVLQIRYASV…RRRKLSLNIP (115 aa). The interval 707–730 is disordered; sequence GDAPKSPRASRKFSSPPPLAIGTS. Serine 739 is modified (phosphoserine). Phosphoserine; by PLK2 occurs at positions 760 and 781. Residues 800–840 form a disordered region; the sequence is TLEESSGFRKPTSDILKEESDDDQSDVDDTEVSPPTPKSFR. The span at 818–830 shows a compositional bias: acidic residues; it reads ESDDDQSDVDDTE. Phosphoserine; by PLK2 is present on serine 854. In terms of domain architecture, Ras-GEF spans 1009-1241; it reads SAMEIAEQLT…YEASLRIEPK (233 aa).

In terms of assembly, homooligomer and heterooligomer with RASGRF2. Interacts with USP8, thereby regulating its stability. Phosphorylated by PLK2, leading to ubiquitination and degradation by the proteasome. In terms of processing, ubiquitinated and degraded following phosphorylation by PLK2. Post-translationally, phosphorylated by SRC and LCK. Phosphorylation by LCK increases its capacity to stimulate the GDP/GTP exchange on Ras, whereas its phosphorylation by SRC seems not to have an effect on stimulation activity.

In terms of biological role, promotes the exchange of Ras-bound GDP by GTP. This chain is Ras-specific guanine nucleotide-releasing factor 1 (Rasgrf1), found in Rattus norvegicus (Rat).